The sequence spans 497 residues: Protein nucleotidyltransferase YdiU (497 aa).

Gly88, Gly90, Arg91, Lys110, Asp122, Gly123, Arg173, and Arg180 together coordinate ATP. The active-site Proton acceptor is the Asp249. The Mg(2+) site is built by Asn250 and Asp259. Asp259 is a binding site for ATP.

This sequence belongs to the SELO family. Requires Mg(2+) as cofactor. It depends on Mn(2+) as a cofactor.

It catalyses the reaction L-seryl-[protein] + ATP = 3-O-(5'-adenylyl)-L-seryl-[protein] + diphosphate. The catalysed reaction is L-threonyl-[protein] + ATP = 3-O-(5'-adenylyl)-L-threonyl-[protein] + diphosphate. It carries out the reaction L-tyrosyl-[protein] + ATP = O-(5'-adenylyl)-L-tyrosyl-[protein] + diphosphate. The enzyme catalyses L-histidyl-[protein] + UTP = N(tele)-(5'-uridylyl)-L-histidyl-[protein] + diphosphate. It catalyses the reaction L-seryl-[protein] + UTP = O-(5'-uridylyl)-L-seryl-[protein] + diphosphate. The catalysed reaction is L-tyrosyl-[protein] + UTP = O-(5'-uridylyl)-L-tyrosyl-[protein] + diphosphate. Functionally, nucleotidyltransferase involved in the post-translational modification of proteins. It can catalyze the addition of adenosine monophosphate (AMP) or uridine monophosphate (UMP) to a protein, resulting in modifications known as AMPylation and UMPylation. This Methylorubrum extorquens (strain CM4 / NCIMB 13688) (Methylobacterium extorquens) protein is Protein nucleotidyltransferase YdiU.